We begin with the raw amino-acid sequence, 79 residues long: CATR tumorigenic conversion 1 protein (79 aa).

This chain is CATR tumorigenic conversion 1 protein (CATR1), found in Homo sapiens (Human).